Here is a 247-residue protein sequence, read N- to C-terminus: tRNA uridine(34) hydroxylase (247 aa).

The 95-residue stretch at Thr-124–Asn-218 folds into the Rhodanese domain. The Cysteine persulfide intermediate role is filled by Cys-178.

Belongs to the TrhO family.

The catalysed reaction is uridine(34) in tRNA + AH2 + O2 = 5-hydroxyuridine(34) in tRNA + A + H2O. Its function is as follows. Catalyzes oxygen-dependent 5-hydroxyuridine (ho5U) modification at position 34 in tRNAs. The polypeptide is tRNA uridine(34) hydroxylase (Rickettsia rickettsii (strain Iowa)).